A 379-amino-acid polypeptide reads, in one-letter code: Chaperone protein DnaJ (379 aa).

A J domain is found at 5-69 (DYYEVLGISK…NKRASYDQFG (65 aa)). The CR-type zinc-finger motif lies at 136–218 (GTTKEISIRK…CHGKGTENKT (83 aa)). Positions 149, 152, 166, 169, 192, 195, 206, and 209 each coordinate Zn(2+). CXXCXGXG motif repeat units lie at residues 149 to 156 (CETCHGDG), 166 to 173 (CSYCNGAG), 192 to 199 (CPKCNGSG), and 206 to 213 (CPTCHGKG).

This sequence belongs to the DnaJ family. As to quaternary structure, homodimer. It depends on Zn(2+) as a cofactor.

The protein localises to the cytoplasm. Functionally, participates actively in the response to hyperosmotic and heat shock by preventing the aggregation of stress-denatured proteins and by disaggregating proteins, also in an autonomous, DnaK-independent fashion. Unfolded proteins bind initially to DnaJ; upon interaction with the DnaJ-bound protein, DnaK hydrolyzes its bound ATP, resulting in the formation of a stable complex. GrpE releases ADP from DnaK; ATP binding to DnaK triggers the release of the substrate protein, thus completing the reaction cycle. Several rounds of ATP-dependent interactions between DnaJ, DnaK and GrpE are required for fully efficient folding. Also involved, together with DnaK and GrpE, in the DNA replication of plasmids through activation of initiation proteins. This chain is Chaperone protein DnaJ, found in Staphylococcus aureus (strain USA300 / TCH1516).